Reading from the N-terminus, the 388-residue chain is Chorismate synthase (388 aa).

Residues Arg39 and Arg45 each contribute to the NADP(+) site. FMN contacts are provided by residues 130–132, 251–252, Gly296, 311–315, and Arg337; these read RSS, NA, and KPIPT.

Belongs to the chorismate synthase family. In terms of assembly, homotetramer. Requires FMNH2 as cofactor.

The catalysed reaction is 5-O-(1-carboxyvinyl)-3-phosphoshikimate = chorismate + phosphate. The protein operates within metabolic intermediate biosynthesis; chorismate biosynthesis; chorismate from D-erythrose 4-phosphate and phosphoenolpyruvate: step 7/7. Catalyzes the anti-1,4-elimination of the C-3 phosphate and the C-6 proR hydrogen from 5-enolpyruvylshikimate-3-phosphate (EPSP) to yield chorismate, which is the branch point compound that serves as the starting substrate for the three terminal pathways of aromatic amino acid biosynthesis. This reaction introduces a second double bond into the aromatic ring system. The sequence is that of Chorismate synthase from Lactococcus lactis subsp. cremoris (strain SK11).